A 179-amino-acid chain; its full sequence is Probable RNA 2'-phosphotransferase (179 aa).

It belongs to the KptA/TPT1 family.

Functionally, removes the 2'-phosphate from RNA via an intermediate in which the phosphate is ADP-ribosylated by NAD followed by a presumed transesterification to release the RNA and generate ADP-ribose 1''-2''-cyclic phosphate (APPR&gt;P). May function as an ADP-ribosylase. This is Probable RNA 2'-phosphotransferase from Fusobacterium nucleatum subsp. nucleatum (strain ATCC 25586 / DSM 15643 / BCRC 10681 / CIP 101130 / JCM 8532 / KCTC 2640 / LMG 13131 / VPI 4355).